The primary structure comprises 413 residues: Protein cycle (413 aa).

A disordered region spans residues 1–43 (MEVQEFCENMEEIEDENYDEEKSARTSDENRKQNHSEIEKRRR). A compositionally biased stretch (acidic residues) spans 8 to 19 (ENMEEIEDENYD). Basic and acidic residues predominate over residues 20-41 (EEKSARTSDENRKQNHSEIEKR). Positions 30–83 (NRKQNHSEIEKRRRDKMNTYINELSSMIPMCFAMQRKLDKLTVLRMAVQHLRGI) constitute a bHLH domain. The region spanning 104–175 (DQELKMIILQ…EQLSSLEQCP (72 aa)) is the PAS 1 domain. The disordered stretch occupies residues 219–242 (NQIKEESDTSSSSRSSTKRKSRLT). Residues 297–367 (PASLDNHPNI…ESHKMVMQVP (71 aa)) enclose the PAS 2 domain. The 42-residue stretch at 372 to 413 (TQVYRFRCKDNSYIQLQSEWRAFKNPWTSEIDYIIAKNSVFL) folds into the PAC domain.

In terms of assembly, efficient DNA binding requires dimerization with another bHLH protein. Forms a heterodimer with Clock in order to activate PER and TIM transcription. As to expression, expressed in head and ovary.

It localises to the nucleus. Its function is as follows. Putative transcription factor involved in the generation of biological rhythms. Activates cycling transcription of Period (PER) and Timeless (TIM) by binding to the E-box (5'-CACGTG-3') present in their promoters. The chain is Protein cycle (cyc) from Drosophila melanogaster (Fruit fly).